The sequence spans 697 residues: Potassium channel KAT2 (697 aa).

Residues 1–63 (MSISCTRNFF…PFDPRFRGWE (63 aa)) are Cytoplasmic-facing. A helical transmembrane segment spans residues 64–84 (MWLVILVIYSAWICPFEFAFI). Residues 85-91 (TYKKDAL) are Extracellular-facing. The chain crosses the membrane as a helical span at residues 92–112 (FIIDNIVNGFFAIDIILTFFV). Residues 113-134 (AYLDSHSYLLVDKPKKIAIRYL) lie on the Cytoplasmic side of the membrane. The chain crosses the membrane as a helical span at residues 135–155 (STWFAFDVCSTAPFQSLSLLF). At 156–165 (KYNGSEIGFR) the chain is on the extracellular side. The N-linked (GlcNAc...) asparagine glycan is linked to Asn158. The helical; Voltage-sensor transmembrane segment at 166 to 186 (VLSMLRLWRLRRVSSLFARLE) threads the bilayer. Over 187 to 200 (KDIRFNYFWTRCTK) the chain is Cytoplasmic. Residues 201-221 (LISVTLFAVHCAGCFAYLIAD) form a helical membrane-spanning segment. The Extracellular segment spans residues 222-248 (QYHDPTKTWIGAVYPNFKETSVWSRYV). The pore-forming intramembrane region spans 249 to 268 (TALYWSITTLTTTGYGDLHA). Topologically, residues 269–272 (ENPR) are extracellular. A helical membrane pass occupies residues 273 to 293 (EMLFFVFFMLFNLGFTSYLIG). The Cytoplasmic portion of the chain corresponds to 294 to 697 (NMTNLVVHWT…HLYILINENS (404 aa)). 377–496 (LFHGVSRNFL…RVIMNNLFMK (120 aa)) contacts a nucleoside 3',5'-cyclic phosphate. One can recognise a KHA domain in the interval 629–697 (RVTIHLKSRD…HLYILINENS (69 aa)).

The protein belongs to the potassium channel family. Plant (TC 1.A.1.4) subfamily. In terms of assembly, the potassium channel is probably composed of a homo- or heterotetrameric complex of pore-forming subunits. May interact with KAT1. Interacts with SLAC1. As to expression, expressed in guard cells of hypocotyls, stems leaves and petioles. Detected also in the phloem of minor veins and in flower at a lower level.

Its subcellular location is the membrane. In terms of biological role, highly selective inward-rectifying potassium channel. This voltage-dependent channel could mediate long-term potassium influx into guard cells leading to stomatal opening. Assuming opened or closed conformations in response to the voltage difference across the membrane, the channel is activated by hyperpolarization. The channel activity is enhanced upon external acidification. The chain is Potassium channel KAT2 (KAT2) from Arabidopsis thaliana (Mouse-ear cress).